We begin with the raw amino-acid sequence, 63 residues long: Megourin-3 (63 aa).

As to quaternary structure, monomer. In terms of processing, contains four disulfide bonds.

The protein localises to the secreted. Its function is as follows. Has antimicrobial activity against Gram-positive bacteria and fungi. This is Megourin-3 from Megoura viciae (Vetch aphid).